Here is a 162-residue protein sequence, read N- to C-terminus: Cyclic pyranopterin monophosphate synthase (162 aa).

Substrate is bound by residues 75–77 (LCH) and 113–114 (ME). Aspartate 128 is a catalytic residue.

The protein belongs to the MoaC family. Homohexamer; trimer of dimers.

The enzyme catalyses (8S)-3',8-cyclo-7,8-dihydroguanosine 5'-triphosphate = cyclic pyranopterin phosphate + diphosphate. It participates in cofactor biosynthesis; molybdopterin biosynthesis. Catalyzes the conversion of (8S)-3',8-cyclo-7,8-dihydroguanosine 5'-triphosphate to cyclic pyranopterin monophosphate (cPMP). The protein is Cyclic pyranopterin monophosphate synthase of Burkholderia cenocepacia (strain ATCC BAA-245 / DSM 16553 / LMG 16656 / NCTC 13227 / J2315 / CF5610) (Burkholderia cepacia (strain J2315)).